The sequence spans 485 residues: Aerolysin-5 (485 aa).

The first 23 residues, 1 to 23 (MQKLKITGLSLIISGLLMAQRHA), serve as a signal peptide directing secretion. 2 cysteine pairs are disulfide-bonded: C42-C98 and C182-C187. The tract at residues 68–84 (WQISGLANGWVIMGPVY) is interaction with host N-linked glycan. The part of the transmembrane beta-barrel after proteolytic activation of the toxin and insertion into the host membrane stretch occupies residues 256–288 (YGLSEKVTTKNKFKWPLVGETELSIEIAANQSW). The interaction with glycans from host GPI-anchor stretch occupies residues 346 to 355 (RWGGNAWYTH). A propeptide spanning residues 446 to 485 (AADGKAPRALSARRGEQGLRLAIPLECRKSSPGLASATSA) is cleaved from the precursor.

It belongs to the aerolysin family. In terms of assembly, homodimer in solution; homoheptamer in the host membrane. After binding to GPI-anchored proteins in target membranes and proteolytic removal of the C-terminal propeptide, the protein assembles into a heptameric pre-pore complex. A further conformation change leads to insertion into the host membrane. Proteolytic cleavage and subsequent release of the propeptide trigger a major conformation change, leading to the formation of a heptameric pre-pore that then inserts into the host membrane.

It localises to the secreted. Its subcellular location is the host cell membrane. Its function is as follows. Secreted, cytolytic toxin that forms pores in host membranes after proteolytic removal of a C-terminal propeptide, leading to destruction of the membrane permeability barrier and cell death. The pores are formed by transmembrane beta-strands and are approximately 3 nm in diameter. The polypeptide is Aerolysin-5 (ahh5) (Aeromonas hydrophila).